A 295-amino-acid chain; its full sequence is Light-independent protochlorophyllide reductase iron-sulfur ATP-binding protein (295 aa).

ATP is bound by residues 10 to 15 and Lys39; that span reads GIGKST. Residue Ser14 participates in Mg(2+) binding. [4Fe-4S] cluster contacts are provided by Cys95 and Cys129. 180–181 serves as a coordination point for ATP; that stretch reads NR. A compositionally biased stretch (basic and acidic residues) spans 275-289; that stretch reads TKDKKENKKEDKENS. Residues 275–295 form a disordered region; sequence TKDKKENKKEDKENSADFTWL.

Belongs to the NifH/BchL/ChlL family. As to quaternary structure, homodimer. Protochlorophyllide reductase is composed of three subunits; ChlL, ChlN and ChlB. The cofactor is [4Fe-4S] cluster.

The protein localises to the plastid. Its subcellular location is the chloroplast. It carries out the reaction chlorophyllide a + oxidized 2[4Fe-4S]-[ferredoxin] + 2 ADP + 2 phosphate = protochlorophyllide a + reduced 2[4Fe-4S]-[ferredoxin] + 2 ATP + 2 H2O. It participates in porphyrin-containing compound metabolism; chlorophyll biosynthesis (light-independent). In terms of biological role, component of the dark-operative protochlorophyllide reductase (DPOR) that uses Mg-ATP and reduced ferredoxin to reduce ring D of protochlorophyllide (Pchlide) to form chlorophyllide a (Chlide). This reaction is light-independent. The L component serves as a unique electron donor to the NB-component of the complex, and binds Mg-ATP. In Physcomitrium patens (Spreading-leaved earth moss), this protein is Light-independent protochlorophyllide reductase iron-sulfur ATP-binding protein.